Consider the following 256-residue polypeptide: Small ribosomal subunit protein uS2 (256 aa).

The protein belongs to the universal ribosomal protein uS2 family.

This chain is Small ribosomal subunit protein uS2, found in Rhizobium rhizogenes (strain K84 / ATCC BAA-868) (Agrobacterium radiobacter).